The primary structure comprises 185 residues: Protein GrpE (185 aa).

Polar residues predominate over residues 1-11; sequence MENTQENPTDQ. The tract at residues 1-38 is disordered; sequence MENTQENPTDQTTEETGREAQAAEPAAQAAENAAPAAE. The segment covering 19–38 has biased composition (low complexity); it reads EAQAAEPAAQAAENAAPAAE.

The protein belongs to the GrpE family. In terms of assembly, homodimer.

The protein localises to the cytoplasm. In terms of biological role, participates actively in the response to hyperosmotic and heat shock by preventing the aggregation of stress-denatured proteins, in association with DnaK and GrpE. It is the nucleotide exchange factor for DnaK and may function as a thermosensor. Unfolded proteins bind initially to DnaJ; upon interaction with the DnaJ-bound protein, DnaK hydrolyzes its bound ATP, resulting in the formation of a stable complex. GrpE releases ADP from DnaK; ATP binding to DnaK triggers the release of the substrate protein, thus completing the reaction cycle. Several rounds of ATP-dependent interactions between DnaJ, DnaK and GrpE are required for fully efficient folding. This is Protein GrpE from Burkholderia mallei (strain NCTC 10247).